The primary structure comprises 820 residues: DNA gyrase subunit A (820 aa).

Residues 31 to 496 (IPDVRDGLKP…TLTNIEIEDL (466 aa)) form the Topo IIA-type catalytic domain. Tyr-119 functions as the O-(5'-phospho-DNA)-tyrosine intermediate in the catalytic mechanism. The short motif at 523 to 529 (QRRGGKG) is the GyrA-box element.

This sequence belongs to the type II topoisomerase GyrA/ParC subunit family. Heterotetramer, composed of two GyrA and two GyrB chains. In the heterotetramer, GyrA contains the active site tyrosine that forms a transient covalent intermediate with DNA, while GyrB binds cofactors and catalyzes ATP hydrolysis.

The protein resides in the cytoplasm. The catalysed reaction is ATP-dependent breakage, passage and rejoining of double-stranded DNA.. In terms of biological role, a type II topoisomerase that negatively supercoils closed circular double-stranded (ds) DNA in an ATP-dependent manner to modulate DNA topology and maintain chromosomes in an underwound state. Negative supercoiling favors strand separation, and DNA replication, transcription, recombination and repair, all of which involve strand separation. Also able to catalyze the interconversion of other topological isomers of dsDNA rings, including catenanes and knotted rings. Type II topoisomerases break and join 2 DNA strands simultaneously in an ATP-dependent manner. This Lawsonia intracellularis (strain PHE/MN1-00) protein is DNA gyrase subunit A.